The primary structure comprises 256 residues: Ribosomal RNA small subunit methyltransferase J (256 aa).

Residues 104–105 (RD), 120–121 (ER), 156–157 (SS), and Asp-174 contribute to the S-adenosyl-L-methionine site.

This sequence belongs to the methyltransferase superfamily. RsmJ family.

The protein localises to the cytoplasm. It catalyses the reaction guanosine(1516) in 16S rRNA + S-adenosyl-L-methionine = N(2)-methylguanosine(1516) in 16S rRNA + S-adenosyl-L-homocysteine + H(+). Functionally, specifically methylates the guanosine in position 1516 of 16S rRNA. The polypeptide is Ribosomal RNA small subunit methyltransferase J (Yersinia pseudotuberculosis serotype O:1b (strain IP 31758)).